Consider the following 370-residue polypeptide: 3-dehydroquinate synthase (370 aa).

Residues 70–75, 104–108, 128–129, lysine 141, lysine 150, and 168–171 each bind NAD(+); these read DAEDGK, GAATD, TT, and TLET. 3 residues coordinate Zn(2+): glutamate 183, histidine 246, and histidine 262.

Belongs to the sugar phosphate cyclases superfamily. Dehydroquinate synthase family. The cofactor is Co(2+). Zn(2+) is required as a cofactor. It depends on NAD(+) as a cofactor.

The protein localises to the cytoplasm. It catalyses the reaction 7-phospho-2-dehydro-3-deoxy-D-arabino-heptonate = 3-dehydroquinate + phosphate. Its pathway is metabolic intermediate biosynthesis; chorismate biosynthesis; chorismate from D-erythrose 4-phosphate and phosphoenolpyruvate: step 2/7. Functionally, catalyzes the conversion of 3-deoxy-D-arabino-heptulosonate 7-phosphate (DAHP) to dehydroquinate (DHQ). The polypeptide is 3-dehydroquinate synthase (Rhodococcus opacus (strain B4)).